Here is a 295-residue protein sequence, read N- to C-terminus: Light-independent protochlorophyllide reductase iron-sulfur ATP-binding protein (295 aa).

Residues glycine 39–threonine 44 and lysine 68 each bind ATP. Mg(2+) is bound at residue serine 43. [4Fe-4S] cluster-binding residues include cysteine 124 and cysteine 158. ATP is bound at residue asparagine 209 to arginine 210.

The protein belongs to the NifH/BchL/ChlL family. Homodimer. Protochlorophyllide reductase is composed of three subunits; ChlL, ChlN and ChlB. The cofactor is [4Fe-4S] cluster.

It catalyses the reaction chlorophyllide a + oxidized 2[4Fe-4S]-[ferredoxin] + 2 ADP + 2 phosphate = protochlorophyllide a + reduced 2[4Fe-4S]-[ferredoxin] + 2 ATP + 2 H2O. The protein operates within porphyrin-containing compound metabolism; chlorophyll biosynthesis (light-independent). Component of the dark-operative protochlorophyllide reductase (DPOR) that uses Mg-ATP and reduced ferredoxin to reduce ring D of protochlorophyllide (Pchlide) to form chlorophyllide a (Chlide). This reaction is light-independent. The L component serves as a unique electron donor to the NB-component of the complex, and binds Mg-ATP. The polypeptide is Light-independent protochlorophyllide reductase iron-sulfur ATP-binding protein (Prochlorococcus marinus (strain MIT 9515)).